The sequence spans 239 residues: Probable intron-encoded endonuclease I-ZbiI (239 aa).

The protein belongs to the LAGLIDADG endonuclease family.

It localises to the mitochondrion. Endonuclease involved in mitochondrial 21S rRNA gene intron homing. The protein is Probable intron-encoded endonuclease I-ZbiI of Zygosaccharomyces bisporus.